Reading from the N-terminus, the 72-residue chain is Holocyclotoxin-1 (72 aa).

Residues 1–22 (MSKVTTVFIGALVLLLLIENGF) form the signal peptide. Cystine bridges form between Cys24-Cys40, Cys32-Cys57, Cys36-Cys60, and Cys42-Cys70.

Expressed in salivary glands.

Its subcellular location is the secreted. Probable neurotoxin. The protein is Holocyclotoxin-1 of Ixodes holocyclus (Australian paralysis tick).